The chain runs to 276 residues: NH(3)-dependent NAD(+) synthetase (276 aa).

43–50 serves as a coordination point for ATP; sequence GISGGVDS. A Mg(2+)-binding site is contributed by Asp-49. Arg-146 serves as a coordination point for deamido-NAD(+). An ATP-binding site is contributed by Thr-166. Residue Glu-171 coordinates Mg(2+). Deamido-NAD(+)-binding residues include Lys-179 and Asp-186. 2 residues coordinate ATP: Lys-195 and Thr-217. A deamido-NAD(+)-binding site is contributed by 266 to 267; the sequence is HK.

This sequence belongs to the NAD synthetase family. As to quaternary structure, homodimer.

The enzyme catalyses deamido-NAD(+) + NH4(+) + ATP = AMP + diphosphate + NAD(+) + H(+). The protein operates within cofactor biosynthesis; NAD(+) biosynthesis; NAD(+) from deamido-NAD(+) (ammonia route): step 1/1. Catalyzes the ATP-dependent amidation of deamido-NAD to form NAD. Uses ammonia as a nitrogen source. The sequence is that of NH(3)-dependent NAD(+) synthetase from Shewanella baltica (strain OS185).